The following is a 204-amino-acid chain: MRADESGPERESREPTHIPGAEPELGGEPTPRGEPGPGFEPGPGGEPAPSRAPFRSRLRKGVLAAVALGGVLGGSARYALGLTFPTPRGTFPVTTFAVNVSGAFLLALLLVYVLEIWPPTRYVRPFAAVGFLGSFTTFSTWMVDTDRLLGHGHYAVAAFNVFGSLFAGLAATGLGLAIGRMALARRVRLAARHGRARRYGWWVR.

A compositionally biased stretch (basic and acidic residues) spans 1 to 16 (MRADESGPERESREPT). The segment at 1 to 53 (MRADESGPERESREPTHIPGAEPELGGEPTPRGEPGPGFEPGPGGEPAPSRAP) is disordered. The span at 32–46 (RGEPGPGFEPGPGGE) shows a compositional bias: pro residues. Helical transmembrane passes span 62–82 (VLAAVALGGVLGGSARYALGL), 96–116 (FAVNVSGAFLLALLLVYVLEI), 125–145 (PFAAVGFLGSFTTFSTWMVDT), and 158–178 (AFNVFGSLFAGLAATGLGLAI). Positions 133 and 136 each coordinate Na(+).

This sequence belongs to the fluoride channel Fluc/FEX (TC 1.A.43) family.

The protein resides in the cell membrane. It catalyses the reaction fluoride(in) = fluoride(out). Its activity is regulated as follows. Na(+) is not transported, but it plays an essential structural role and its presence is essential for fluoride channel function. Its function is as follows. Fluoride-specific ion channel. Important for reducing fluoride concentration in the cell, thus reducing its toxicity. The sequence is that of Fluoride-specific ion channel FluC 3 from Streptomyces avermitilis (strain ATCC 31267 / DSM 46492 / JCM 5070 / NBRC 14893 / NCIMB 12804 / NRRL 8165 / MA-4680).